A 217-amino-acid chain; its full sequence is MYLKRILITLSLITLPIVPCLSYAAESISNVGINNTGSTANLAPAAADANVSASDKHEESWWQRSKNNLSTTWNAPQSHDIYIPTITWHNRWTYDKEKTDRYNEKPWGAGYGVSRLDKDGDWHGLYIMAFKDSYNKWEPIGGYGYEKRWRPTSDQDFQLGLGFTAGFTMRDNWNYIPIPVLLPLASISYSKLSFQATYIPGTYNNGNVFFAWFRWQI.

The signal sequence occupies residues 1–24; it reads MYLKRILITLSLITLPIVPCLSYA. Catalysis depends on residues histidine 89, aspartate 132, and serine 133.

It belongs to the lipid A palmitoyltransferase family. Homodimer.

Its subcellular location is the cell outer membrane. The catalysed reaction is a lipid A + a 1,2-diacyl-sn-glycero-3-phosphocholine = a hepta-acyl lipid A + a 2-acyl-sn-glycero-3-phosphocholine. The enzyme catalyses a lipid IVA + a 1,2-diacyl-sn-glycero-3-phosphocholine = a lipid IVB + a 2-acyl-sn-glycero-3-phosphocholine. It carries out the reaction a lipid IIA + a 1,2-diacyl-sn-glycero-3-phosphocholine = a lipid IIB + a 2-acyl-sn-glycero-3-phosphocholine. Its function is as follows. Transfers a fatty acid residue from the sn-1 position of a phospholipid to the N-linked hydroxyfatty acid chain on the proximal unit of lipid A or its precursors. This Pectobacterium atrosepticum (strain SCRI 1043 / ATCC BAA-672) (Erwinia carotovora subsp. atroseptica) protein is Lipid A acyltransferase PagP.